The chain runs to 196 residues: dTTP/UTP pyrophosphatase (196 aa).

The active-site Proton acceptor is the aspartate 75.

It belongs to the Maf family. YhdE subfamily. The cofactor is a divalent metal cation.

It localises to the cytoplasm. It catalyses the reaction dTTP + H2O = dTMP + diphosphate + H(+). The enzyme catalyses UTP + H2O = UMP + diphosphate + H(+). Its function is as follows. Nucleoside triphosphate pyrophosphatase that hydrolyzes dTTP and UTP. May have a dual role in cell division arrest and in preventing the incorporation of modified nucleotides into cellular nucleic acids. The chain is dTTP/UTP pyrophosphatase from Wolbachia pipientis subsp. Culex pipiens (strain wPip).